The chain runs to 312 residues: Ribonuclease Z (312 aa).

Residues His63, His65, Asp67, His68, His141, Asp212, and His270 each contribute to the Zn(2+) site. Asp67 functions as the Proton acceptor in the catalytic mechanism.

It belongs to the RNase Z family. In terms of assembly, homodimer. It depends on Zn(2+) as a cofactor.

The enzyme catalyses Endonucleolytic cleavage of RNA, removing extra 3' nucleotides from tRNA precursor, generating 3' termini of tRNAs. A 3'-hydroxy group is left at the tRNA terminus and a 5'-phosphoryl group is left at the trailer molecule.. Its function is as follows. Zinc phosphodiesterase, which displays some tRNA 3'-processing endonuclease activity. Probably involved in tRNA maturation, by removing a 3'-trailer from precursor tRNA. This chain is Ribonuclease Z, found in Lactobacillus helveticus (strain DPC 4571).